The following is a 1020-amino-acid chain: Probable leucine-rich repeat receptor-like serine/threonine-protein kinase At3g14840 (1020 aa).

The signal sequence occupies residues 1 to 26; the sequence is MSLNRQLLFTYYFIVSLILFSDFVSS. At 27–614 the chain is on the extracellular side; that stretch reads ATLPKEEVDA…GTGGGSSVGT (588 aa). 2 N-linked (GlcNAc...) asparagine glycosylation sites follow: Asn-50 and Asn-81. 10 LRR repeats span residues 86 to 110, 111 to 134, 136 to 157, 158 to 181, 182 to 204, 206 to 231, 253 to 276, 277 to 301, 302 to 324, and 326 to 349; these read ICHVTNIVLKAQDLQGSLPTDLSGL, PFLQELDLTRNYLNGSIPPEWGAS, LLNISLLGNRISGSIPKELGNL, TTLSGLVLEYNQLSGKIPPELGNL, PNLKRLLLSSNNLSGEIPSTFAK, TTLTDLRISDNQFTGAIPDFIQNWKG, LGTLTDLRITDLSGPESPFPPLRN, MTSMKYLILRNCNLTGDLPAYLGQN, RKLKNLDLSFNKLSGPIPATYSG, and SDVDFIYFTSNMLNGQVPSWMVDQ. Residues Asn-124, Asn-138, and Asn-156 are each glycosylated (N-linked (GlcNAc...) asparagine). Asn-193 carries an N-linked (GlcNAc...) asparagine glycan. N-linked (GlcNAc...) asparagine glycosylation is found at Asn-276 and Asn-289. Asn-359, Asn-386, Asn-389, Asn-417, Asn-461, Asn-469, and Asn-498 each carry an N-linked (GlcNAc...) asparagine glycan. One copy of the LRR 11 repeat lies at 479-501; sequence QARLSAISLTYQALCLGKGNYTV. A helical transmembrane segment spans residues 615-635; sequence VVGSVIASTVFLVLLIGGILW. Over 636–1020 the chain is Cytoplasmic; sequence WRGCLRPKSQ…LDSAYWNTRT (385 aa). The 278-residue stretch at 672 to 949 folds into the Protein kinase domain; it reads FDPANKIGEG…VSMLEGHSTV (278 aa). Residues 678-686 and Lys-700 contribute to the ATP site; that span reads IGEGGFGPV. Residue Tyr-745 is modified to Phosphotyrosine. Catalysis depends on Asp-798, which acts as the Proton acceptor. Ser-831 bears the Phosphoserine mark. A phosphothreonine mark is found at Thr-832 and Thr-837. The residue at position 845 (Tyr-845) is a Phosphotyrosine.

The protein belongs to the protein kinase superfamily. Ser/Thr protein kinase family.

It localises to the cell membrane. It catalyses the reaction L-seryl-[protein] + ATP = O-phospho-L-seryl-[protein] + ADP + H(+). The catalysed reaction is L-threonyl-[protein] + ATP = O-phospho-L-threonyl-[protein] + ADP + H(+). The chain is Probable leucine-rich repeat receptor-like serine/threonine-protein kinase At3g14840 (LRR-RLK) from Arabidopsis thaliana (Mouse-ear cress).